Reading from the N-terminus, the 277-residue chain is F420-dependent methylenetetrahydromethanopterin dehydrogenase (277 aa).

Positions Glu-249–Glu-277 are disordered.

This sequence belongs to the MTD family.

It catalyses the reaction 5,10-methylenetetrahydromethanopterin + oxidized coenzyme F420-(gamma-L-Glu)(n) + 2 H(+) = 5,10-methenyl-5,6,7,8-tetrahydromethanopterin + reduced coenzyme F420-(gamma-L-Glu)(n). It participates in one-carbon metabolism; methanogenesis from CO(2); 5,10-methylene-5,6,7,8-tetrahydromethanopterin from 5,10-methenyl-5,6,7,8-tetrahydromethanopterin (coenzyme F420 route): step 1/1. Catalyzes the reversible reduction of methenyl-H(4)MPT(+) to methylene-H(4)MPT. This is F420-dependent methylenetetrahydromethanopterin dehydrogenase from Methanococcus aeolicus (strain ATCC BAA-1280 / DSM 17508 / OCM 812 / Nankai-3).